We begin with the raw amino-acid sequence, 320 residues long: Uridine phosphorylase 2 (320 aa).

Phosphate-binding positions include G66, R100, and 144-147; that span reads RIGT. C95 and C102 form a disulfide bridge. Uridine contacts are provided by residues 148–149 and 223–225; these read SG and QGR.

This sequence belongs to the PNP/UDP phosphorylase family. In terms of assembly, homodimer. In terms of tissue distribution, liver specific.

The enzyme catalyses uridine + phosphate = alpha-D-ribose 1-phosphate + uracil. It carries out the reaction 2'-deoxyuridine + phosphate = 2-deoxy-alpha-D-ribose 1-phosphate + uracil. It functions in the pathway pyrimidine metabolism; UMP biosynthesis via salvage pathway; uracil from uridine (phosphorylase route): step 1/1. A conditional disulfide bridge can form within the protein that dislocates a critical phosphate-coordinating arginine Arg-100 away from the active site, disabling the enzyme. Catalyzes the reversible phosphorylytic cleavage of uridine to uracil and ribose-1-phosphate which can then be utilized as carbon and energy sources or in the rescue of pyrimidine bases for nucleotide synthesis. Shows broad substrate specificity and can also accept deoxyuridine and other analogous compounds. This is Uridine phosphorylase 2 from Mus musculus (Mouse).